The following is a 392-amino-acid chain: Alanine--glyoxylate aminotransferase (392 aa).

Lysine 209 is subject to N6-(pyridoxal phosphate)lysine. Lysine 225 is modified (N6-acetyllysine; alternate). Lysine 225 is subject to N6-succinyllysine; alternate. N6-acetyllysine occurs at positions 234 and 312. Arginine 360 is a binding site for substrate. Residues 390–392 (KKL) carry the Microbody targeting signal motif.

The protein belongs to the class-V pyridoxal-phosphate-dependent aminotransferase family. In terms of assembly, homodimer. It depends on pyridoxal 5'-phosphate as a cofactor.

The protein localises to the peroxisome. It catalyses the reaction L-serine + pyruvate = 3-hydroxypyruvate + L-alanine. It carries out the reaction glyoxylate + L-alanine = glycine + pyruvate. In terms of biological role, peroxisomal aminotransferase that catalyzes the transamination of glyoxylate to glycine and contributes to the glyoxylate detoxification. Also catalyzes the transamination between L-serine and pyruvate and contributes to gluconeogenesis from the L-serine metabolism. The sequence is that of Alanine--glyoxylate aminotransferase from Pongo abelii (Sumatran orangutan).